A 488-amino-acid polypeptide reads, in one-letter code: UDP-N-acetylmuramate--L-alanine ligase (488 aa).

127-133 (GTHGKTT) contacts ATP.

It belongs to the MurCDEF family.

The protein localises to the cytoplasm. The enzyme catalyses UDP-N-acetyl-alpha-D-muramate + L-alanine + ATP = UDP-N-acetyl-alpha-D-muramoyl-L-alanine + ADP + phosphate + H(+). The protein operates within cell wall biogenesis; peptidoglycan biosynthesis. In terms of biological role, cell wall formation. The chain is UDP-N-acetylmuramate--L-alanine ligase from Shewanella putrefaciens (strain CN-32 / ATCC BAA-453).